Reading from the N-terminus, the 130-residue chain is Small ribosomal subunit protein uS11 (130 aa).

This sequence belongs to the universal ribosomal protein uS11 family. Part of the 30S ribosomal subunit. Interacts with proteins S7 and S18. Binds to IF-3.

Its function is as follows. Located on the platform of the 30S subunit, it bridges several disparate RNA helices of the 16S rRNA. Forms part of the Shine-Dalgarno cleft in the 70S ribosome. This chain is Small ribosomal subunit protein uS11, found in Dehalococcoides mccartyi (strain ATCC BAA-2100 / JCM 16839 / KCTC 5957 / BAV1).